Reading from the N-terminus, the 541-residue chain is MAKELKFSEDARSKMLAGVDKLANTVKTTLGPKGRNVVLEQSYGNPTITNDGVTIAKAIELEDHFENMGAKLVSEVASKTNDIAGDGTTTATVLTQAIVNEGMKNVTAGANPVGIRRGIEKATGAAVDALHKMSHDVKTKDDIAQIASISSASKETGKLIADAMEKVGNDGVITIEESRGVDTSLDVVEGMQFDRGYMSQYMVTDNDKMEANLDNPYILITDKKIANIQDILPLLQSVVEQSRSLLIIADDITGEALPTLVLNKMRGTFNVVAVKAPGFGDRRKAQLQDIAVLTGGTVITDDLGLNLKDTTIDQLGQAQKVNVTKDDTTVVEGAGSKDQIAARVAEIKGQIEDTTSDFDRDKLKERLAKLSGGVAVVRVGAATETELKERKYRIEDALNATRAAVEEGFVAGGGTALINVIGDVAKLEAEGDEKTGINIVLRALEEPVRQIAQNAGVEGSVVVEHLKGEKPGVGYNAADNKYEDMVAAGITDPTKVTRSALQNAASVSALLLTTEAVVAEKPEDNPAPAAPAANPGMGGMM.

ATP-binding positions include 29-32, 86-90, Gly413, 476-478, and Asp492; these read TLGP, DGTTT, and NAA. The disordered stretch occupies residues 521–541; it reads KPEDNPAPAAPAANPGMGGMM. Residues 526-535 show a composition bias toward low complexity; it reads PAPAAPAANP.

It belongs to the chaperonin (HSP60) family. As to quaternary structure, forms a cylinder of 14 subunits composed of two heptameric rings stacked back-to-back. Interacts with the co-chaperonin GroES.

Its subcellular location is the cytoplasm. It catalyses the reaction ATP + H2O + a folded polypeptide = ADP + phosphate + an unfolded polypeptide.. In terms of biological role, together with its co-chaperonin GroES, plays an essential role in assisting protein folding. The GroEL-GroES system forms a nano-cage that allows encapsulation of the non-native substrate proteins and provides a physical environment optimized to promote and accelerate protein folding. The sequence is that of Chaperonin GroEL from Levilactobacillus brevis (strain ATCC 367 / BCRC 12310 / CIP 105137 / JCM 1170 / LMG 11437 / NCIMB 947 / NCTC 947) (Lactobacillus brevis).